The following is a 309-amino-acid chain: Homoserine O-succinyltransferase (309 aa).

C142 acts as the Acyl-thioester intermediate in catalysis. Substrate-binding residues include K163 and S192. H235 serves as the catalytic Proton acceptor. E237 is a catalytic residue. R249 is a binding site for substrate.

It belongs to the MetA family. In terms of assembly, homodimer.

The protein localises to the cytoplasm. It carries out the reaction L-homoserine + succinyl-CoA = O-succinyl-L-homoserine + CoA. Its pathway is amino-acid biosynthesis; L-methionine biosynthesis via de novo pathway; O-succinyl-L-homoserine from L-homoserine: step 1/1. Transfers a succinyl group from succinyl-CoA to L-homoserine, forming succinyl-L-homoserine. The polypeptide is Homoserine O-succinyltransferase (Escherichia coli O17:K52:H18 (strain UMN026 / ExPEC)).